A 155-amino-acid chain; its full sequence is Small ribosomal subunit protein uS7cz/uS7cy (155 aa).

It belongs to the universal ribosomal protein uS7 family. In terms of assembly, part of the 30S ribosomal subunit.

It is found in the plastid. It localises to the chloroplast. In terms of biological role, one of the primary rRNA binding proteins, it binds directly to 16S rRNA where it nucleates assembly of the head domain of the 30S subunit. This is Small ribosomal subunit protein uS7cz/uS7cy (rps7-A) from Guizotia abyssinica (Niger).